Reading from the N-terminus, the 151-residue chain is Large ribosomal subunit protein bL9 (151 aa).

It belongs to the bacterial ribosomal protein bL9 family.

In terms of biological role, binds to the 23S rRNA. The polypeptide is Large ribosomal subunit protein bL9 (Chlorobium phaeovibrioides (strain DSM 265 / 1930) (Prosthecochloris vibrioformis (strain DSM 265))).